Consider the following 130-residue polypeptide: Small ribosomal subunit protein uS8 (130 aa).

It belongs to the universal ribosomal protein uS8 family. In terms of assembly, part of the 30S ribosomal subunit.

In terms of biological role, one of the primary rRNA binding proteins, it binds directly to 16S rRNA central domain where it helps coordinate assembly of the platform of the 30S subunit. The sequence is that of Small ribosomal subunit protein uS8 from Halorubrum lacusprofundi (strain ATCC 49239 / DSM 5036 / JCM 8891 / ACAM 34).